Reading from the N-terminus, the 198-residue chain is FMN-dependent NADH:quinone oxidoreductase (198 aa).

FMN contacts are provided by residues S10 and 16-18; that span reads SIS.

Belongs to the azoreductase type 1 family. As to quaternary structure, homodimer. FMN is required as a cofactor.

The catalysed reaction is 2 a quinone + NADH + H(+) = 2 a 1,4-benzosemiquinone + NAD(+). The enzyme catalyses N,N-dimethyl-1,4-phenylenediamine + anthranilate + 2 NAD(+) = 2-(4-dimethylaminophenyl)diazenylbenzoate + 2 NADH + 2 H(+). Its function is as follows. Quinone reductase that provides resistance to thiol-specific stress caused by electrophilic quinones. In terms of biological role, also exhibits azoreductase activity. Catalyzes the reductive cleavage of the azo bond in aromatic azo compounds to the corresponding amines. The protein is FMN-dependent NADH:quinone oxidoreductase of Mycoplasmopsis pulmonis (strain UAB CTIP) (Mycoplasma pulmonis).